Here is a 244-residue protein sequence, read N- to C-terminus: U11/U12 small nuclear ribonucleoprotein 35 kDa protein (244 aa).

One can recognise an RRM domain in the interval 51–129; sequence LTLFVARLNL…HEIFVDYELE (79 aa). Residues 146-162 show a composition bias toward basic and acidic residues; sequence GKKESGQLRFGGRDRPF. Positions 146–244 are disordered; the sequence is GKKESGQLRF…KSRDKRDRSK (99 aa). Lys-172 is covalently cross-linked (Glycyl lysine isopeptide (Lys-Gly) (interchain with G-Cter in SUMO2)). 2 stretches are compositionally biased toward basic and acidic residues: residues 173–185 and 192–244; these read NEPH…ERRE and RHWD…DRSK.

As to quaternary structure, component of the U11/U12 snRNPs that are part of the U12-type spliceosome.

Its subcellular location is the nucleus. This is U11/U12 small nuclear ribonucleoprotein 35 kDa protein (Snrnp35) from Mus musculus (Mouse).